A 338-amino-acid polypeptide reads, in one-letter code: MFCIGGVNMKRSFFLYSNGTLKRKDNTITFINEKDEKRDIPIEMVDDFYVMSEMNFNTKFINYISQFGIPIHFFNYYTFYTGSFYPREMNISGQLLVKQVEHYTNEQKRVEIAREFIEGASFNIYRNLRYYNGRGKDLKLYMDQIEELRKHLKEVNNVEELMGYEGNIRKIYYEAWNIIVNQEIDFEKRVKNPPDNMINSLISFVNTLFYTKVLGEIYKTQLNPTVSYLHQPSTRRFSLSLDISEVFKPLIVDRLIFSLLNKNQITEKSFVKDFEYLRLKEDVSKLIVQEFEDRLKQIITHKDLNRKISYQYLVRLECYKLIKHLLGEKKYKSFQMWW.

Glu-165, His-230, and Glu-245 together coordinate Mn(2+).

It belongs to the CRISPR-associated endonuclease Cas1 family. As to quaternary structure, homodimer, forms a heterotetramer with a Cas2 homodimer. Mg(2+) is required as a cofactor. The cofactor is Mn(2+).

In terms of biological role, CRISPR (clustered regularly interspaced short palindromic repeat), is an adaptive immune system that provides protection against mobile genetic elements (viruses, transposable elements and conjugative plasmids). CRISPR clusters contain spacers, sequences complementary to antecedent mobile elements, and target invading nucleic acids. CRISPR clusters are transcribed and processed into CRISPR RNA (crRNA). Acts as a dsDNA endonuclease. Involved in the integration of spacer DNA into the CRISPR cassette. The sequence is that of CRISPR-associated endonuclease Cas1 from Fusobacterium nucleatum subsp. nucleatum (strain ATCC 25586 / DSM 15643 / BCRC 10681 / CIP 101130 / JCM 8532 / KCTC 2640 / LMG 13131 / VPI 4355).